Here is a 525-residue protein sequence, read N- to C-terminus: GMP synthase [glutamine-hydrolyzing] (525 aa).

Residues 9-207 form the Glutamine amidotransferase type-1 domain; that stretch reads RILILDFGSQ…VRDICQCEAL (199 aa). Cysteine 86 (nucleophile) is an active-site residue. Active-site residues include histidine 181 and glutamate 183. The GMPS ATP-PPase domain occupies 208–400; that stretch reads WTPAKIIDDA…LGLPYDMLYR (193 aa). 235-241 contacts ATP; it reads SGGVDSS.

In terms of assembly, homodimer.

The enzyme catalyses XMP + L-glutamine + ATP + H2O = GMP + L-glutamate + AMP + diphosphate + 2 H(+). The protein operates within purine metabolism; GMP biosynthesis; GMP from XMP (L-Gln route): step 1/1. In terms of biological role, catalyzes the synthesis of GMP from XMP. This Salmonella typhi protein is GMP synthase [glutamine-hydrolyzing].